The chain runs to 747 residues: Photosystem I P700 chlorophyll a apoprotein A2 (747 aa).

8 helical membrane-spanning segments follow: residues 46–69 (LFAT…FHIA), 135–158 (LFQG…LHLQ), 175–199 (LNHH…HVAI), 273–291 (IAHH…GHMY), 341–364 (LHFQ…QHMG), 380–406 (SALY…IFFV), 428–450 (ALIS…IYVH), and 530–548 (FLVH…LILI). The [4Fe-4S] cluster site is built by Cys-572 and Cys-581. 2 helical membrane-spanning segments follow: residues 588-609 (ATYL…YWHW) and 656-678 (LSPW…MFLI). Residues His-667, Met-675, and Tyr-683 each coordinate divinyl chlorophyll a. Trp-684 lines the phylloquinone pocket. A helical transmembrane segment spans residues 720 to 740 (LVGLTHFTVGNFVTFGAFVIA).

It belongs to the PsaA/PsaB family. In terms of assembly, the PsaA/B heterodimer binds the P700 divinyl chlorophyll special pair and subsequent electron acceptors. PSI consists of a core antenna complex that captures photons, and an electron transfer chain that converts photonic excitation into a charge separation. The cyanobacterial PSI reaction center is composed of one copy each of PsaA,B,C,D,E,F,I,J,K,L,M and X, and forms trimeric complexes. The cofactor is PSI electron transfer chain: 5 divinyl chlorophyll a, 1 divinyl chlorophyll a', 2 phylloquinones and 3 4Fe-4S clusters. PSI core antenna: 90 divinyl chlorophyll a, 22 carotenoids, 3 phospholipids and 1 galactolipid. P700 is a divinyl chlorophyll a/divinyl chlorophyll a' dimer, A0 is one or more divinyl chlorophyll a, A1 is one or both phylloquinones and FX is a shared 4Fe-4S iron-sulfur center..

Its subcellular location is the cellular thylakoid membrane. It carries out the reaction reduced [plastocyanin] + hnu + oxidized [2Fe-2S]-[ferredoxin] = oxidized [plastocyanin] + reduced [2Fe-2S]-[ferredoxin]. Functionally, psaA and PsaB bind P700, the primary electron donor of photosystem I (PSI), as well as the electron acceptors A0, A1 and FX. PSI is a plastocyanin/cytochrome c6-ferredoxin oxidoreductase, converting photonic excitation into a charge separation, which transfers an electron from the donor P700 chlorophyll pair to the spectroscopically characterized acceptors A0, A1, FX, FA and FB in turn. Oxidized P700 is reduced on the lumenal side of the thylakoid membrane by plastocyanin or cytochrome c6. In Prochlorococcus marinus (strain SARG / CCMP1375 / SS120), this protein is Photosystem I P700 chlorophyll a apoprotein A2.